We begin with the raw amino-acid sequence, 468 residues long: uncharacterized protein (468 aa).

A TRAM domain is found at 3–61; the sequence is TFANGMTLDVTVDALAPGGKAVCRHEGRVIFVDRGLPGQQLHVRLTTVRKRFAEAECLA. [4Fe-4S] cluster-binding residues include Cys-74, Cys-80, Cys-83, and Cys-162. Gln-288, Tyr-317, Glu-338, and Asp-389 together coordinate S-adenosyl-L-methionine. Cys-416 acts as the Nucleophile in catalysis.

This sequence belongs to the class I-like SAM-binding methyltransferase superfamily. RNA M5U methyltransferase family.

This is an uncharacterized protein from Nitratidesulfovibrio vulgaris (strain ATCC 29579 / DSM 644 / CCUG 34227 / NCIMB 8303 / VKM B-1760 / Hildenborough) (Desulfovibrio vulgaris).